We begin with the raw amino-acid sequence, 180 residues long: Protein sll1483 (180 aa).

The signal sequence occupies residues 1-26 (MKTAARIVAFTALTGFALGMPTVAMA). In terms of domain architecture, FAS1 spans 45-176 (AMTIVEVAAG…GVIHVIDQVI (132 aa)).

In Synechocystis sp. (strain ATCC 27184 / PCC 6803 / Kazusa), this protein is Protein sll1483.